The primary structure comprises 1523 residues: MAALAAGGYTRSDTIEKLSSVMAGVPARRNQSSPPPAPPLCLRRRTRLAAAPEDTVQNRVTLEKVLGITAQNSSGLTCDPGTGHVAYLAGCVVVVLNPKENKQQHIFNTTRKSLSALAFSPDGKYIVTGENGHRPTVRIWDVEEKTQVAEMLGHKYGVACVAFSPNMKHIVSMGYQHDMVLNVWDWKKDIVVASNKVSCRVIALSFSEDSSYFVTVGNRHVRFWFLEASTEAKVTSTVPLVGRSGILGELHNNIFCGVACGRGRMAGNTFCVSYSGLLCQFNEKRVLDKWINLKVSLSSCLCVSDELIFCGCTDGIVRIFQAHSLLYLTNLPKPHYLGVDVAHGLDSSFLFHRKAEAVYPDTVALTFDPVHQWLSCVYKDHSIYIWDVKDIDEVSKIWSELFHSSFVWNVEVYPEFEDQRACLPSGTFLTCSSDNTIRFWNLDSASDTRWQKNIFSDSLLKVVYVENDIQHLQDLSHFPDRGSENGTPMDMKAGVRVMQVSPDGQHLASGDRSGNLRIHELHFMDELIKVEAHDAEVLCLEYSKPETGVTLLASASRDRLIHVLNVEKNYNLEQTLDDHSSSITAIKFAGTRDVQMISCGADKSIYFRSAQQASDGLHFVRTHHVAEKTTLYDMDIDITQKYVAVACQDRNVRVYNTVSGKQKKCYKGSQGDEGSLLKVHVDPSGTFLATSCSDKSISLIDFYSGECVAKMFGHSEIVTGMKFTYDCRHLITVSGDSCVFIWHLGPEITTCMKQHLLEINHQEQQQQPKDQKWSGPPSQETYASTPSEIRSLSPGEQTEDEMEEECEPEELLKTPSKDSLDPDPRCLLTNGKLPLWAKRLLGDDDVADSSAFHAKRSYQPHGRWAERAEQEPLKTILDAWSLDSYFTPMKPENLQDSVLDSVEPQNLAGLLSECSLGNGHTSPGEGLVSYLLHPELGSPKEDNRGHPSYLPLQREATEASELILCSPEAEVSLTGMHREYYEEETEAGPEDQQGDTYLRVSSVSSKDQSPPEDSGESEAELECSFAAAHSSAPQTDPGPHLTMTAGKPEYPSTEELSQPELPGLGNGSLPQTPEQEKFLRHHFETLTDAPTEELFHGSLGDIKISETEDYFFNPRLSISTQFLSRLQKTSRCPPRLPLHLMKSPEAQPVGQGGNQPKAGPLRAGTGYMSSDGTNVLSGQKAEETQEALSLLDRKPPTPTSVLTTGREQSISAPSSCSYLESTTSSHAKTTRSISLGDSEGPVTAELPQSLHKPLSPGQELQAIPTTVALTSSIKDHEPAPLSWGNHEARASLKLTLSSVCEQLLSPPPQEPPITHVWSQEPVDVPPSMAVTVASFCAPSPVDMSTLGLHSSMFLPKTSASGPLTPPAHLQLLETRSRVPGSTAALLEPTPDASGVIADSPGHWDTEVPTPELLGSVESVLHRLQTAFQEALDLYRMLVSSSQLGPEQQQAQTELASTFHWILNQLEASNCMAAANLAPPQTLPSPDPLSLPTLCPLASPNLQALLEHYSELLVQAVRRKARGD.

An N-acetylalanine modification is found at alanine 2. A Phosphoserine modification is found at serine 33. Threonine 46 carries the phosphothreonine modification. WD repeat units follow at residues 109 to 150 (TTRK…QVAE), 153 to 194 (GHKY…VVAS), 196 to 234 (KVSC…EAKV), 291 to 330 (INLK…YLTN), 357 to 396 (AVYP…EVSK), 411 to 450 (EVYP…DTRW), 490 to 529 (DMKA…ELIK), 532 to 574 (AHDA…NLEQ), 578 to 618 (DHSS…DGLH), 626 to 665 (AEKT…QKKC), 671 to 713 (GDEG…KMFG), and 714 to 752 (HSEI…TTCM). Serine 501 is subject to Phosphoserine. The interval 762 to 824 (QEQQQQPKDQ…PSKDSLDPDP (63 aa)) is disordered. A compositionally biased stretch (polar residues) spans 776-790 (PPSQETYASTPSEIR). Acidic residues predominate over residues 797–809 (QTEDEMEEECEPE). Residues 803 to 846 (EEECEPEELLKTPSKDSLDPDPRCLLTNGKLPLWAKRLLGDDDV) form a WD 13 repeat. A compositionally biased stretch (basic and acidic residues) spans 810–824 (ELLKTPSKDSLDPDP). 2 positions are modified to phosphoserine: serine 966 and serine 972. The disordered stretch occupies residues 1000 to 1072 (VSSVSSKDQS…GLGNGSLPQT (73 aa)). The residue at position 1072 (threonine 1072) is a Phosphothreonine. Residues serine 1117, serine 1143, and serine 1169 each carry the phosphoserine modification. The tract at residues 1143-1258 (SPEAQPVGQG…SLHKPLSPGQ (116 aa)) is disordered. 2 stretches are compositionally biased toward polar residues: residues 1167-1177 (YMSSDGTNVLS) and 1199-1213 (TSVL…ISAP). Residues 1214 to 1225 (SSCSYLESTTSS) show a composition bias toward low complexity. Positions 1226 to 1235 (HAKTTRSISL) are enriched in polar residues. Residue serine 1234 is modified to Phosphoserine.

In terms of assembly, can form homodimers (via C-terminus). Interacts (via C-terminus) with MAPKBP1 (via C-terminus). Interacts with CDK5RAP2, CEP152, CEP63 and KIAA0753. CEP63, CDK5RAP2, CEP152, WDR62 are proposed to form a stepwise assembled complex at the centrosome forming a ring near parental centrioles. In terms of tissue distribution, prominent in neural crest lineages from 9.5 dpc to 11.5 dpc. Also expressed in the ventricular and subventricular zones during the period of cerebral cortical neurogenesis (11.5-16.5 dpc), with expression decreasing in intensity by 17.5 dpc. In the cerebellum, it is strongly expressed in precursors of granule neurons at late embryonic and early postnatal stages; by postnatal day 9 (P9). Present in fetal brain, enriched within the ventricular and subventricular zone (at protein level).

The protein resides in the nucleus. Its subcellular location is the cytoplasm. It localises to the cytoskeleton. It is found in the spindle pole. The protein localises to the microtubule organizing center. The protein resides in the centrosome. Its subcellular location is the centriole. Required for cerebral cortical development. Plays a role in neuronal proliferation and migration. Plays a role in mother-centriole-dependent centriole duplication; the function seems also to involve CEP152, CDK5RAP2 and CEP63 through a stepwise assembled complex at the centrosome that recruits CDK2 required for centriole duplication. This is WD repeat-containing protein 62 (Wdr62) from Mus musculus (Mouse).